The following is a 137-amino-acid chain: Nucleoside diphosphate kinase (137 aa).

The ATP site is built by Lys-9, Phe-57, Arg-85, Thr-91, Arg-102, and Asn-112. Residue His-115 is the Pros-phosphohistidine intermediate of the active site.

Belongs to the NDK family. In terms of assembly, homotetramer. It depends on Mg(2+) as a cofactor.

The protein localises to the cytoplasm. The catalysed reaction is a 2'-deoxyribonucleoside 5'-diphosphate + ATP = a 2'-deoxyribonucleoside 5'-triphosphate + ADP. It catalyses the reaction a ribonucleoside 5'-diphosphate + ATP = a ribonucleoside 5'-triphosphate + ADP. Major role in the synthesis of nucleoside triphosphates other than ATP. The ATP gamma phosphate is transferred to the NDP beta phosphate via a ping-pong mechanism, using a phosphorylated active-site intermediate. The polypeptide is Nucleoside diphosphate kinase (Helicobacter hepaticus (strain ATCC 51449 / 3B1)).